Here is a 72-residue protein sequence, read N- to C-terminus: Putative snRNP Sm-like protein (72 aa).

The Sm domain maps to 4 to 72 (RPLDILNNAL…RGDNVVYVSP (69 aa)).

This sequence belongs to the snRNP Sm proteins family.

This Methanosarcina acetivorans (strain ATCC 35395 / DSM 2834 / JCM 12185 / C2A) protein is Putative snRNP Sm-like protein.